The chain runs to 210 residues: uncharacterized protein (210 aa).

This is an uncharacterized protein from Acanthamoeba polyphaga (Amoeba).